Reading from the N-terminus, the 419-residue chain is S-adenosylmethionine synthase (419 aa).

Histidine 15 contacts ATP. Aspartate 17 serves as a coordination point for Mg(2+). Glutamate 43 contributes to the K(+) binding site. Residues glutamate 56 and glutamine 100 each contribute to the L-methionine site. The interval 100-110 (QSPDIAQGVNE) is flexible loop. Residues 171-173 (DGK), 248-249 (KF), aspartate 257, 263-264 (RK), alanine 280, and lysine 284 contribute to the ATP site. Aspartate 257 serves as a coordination point for L-methionine. Residue lysine 288 participates in L-methionine binding.

The protein belongs to the AdoMet synthase family. In terms of assembly, homotetramer; dimer of dimers. Mg(2+) serves as cofactor. K(+) is required as a cofactor.

The protein localises to the cytoplasm. It catalyses the reaction L-methionine + ATP + H2O = S-adenosyl-L-methionine + phosphate + diphosphate. It participates in amino-acid biosynthesis; S-adenosyl-L-methionine biosynthesis; S-adenosyl-L-methionine from L-methionine: step 1/1. Catalyzes the formation of S-adenosylmethionine (AdoMet) from methionine and ATP. The overall synthetic reaction is composed of two sequential steps, AdoMet formation and the subsequent tripolyphosphate hydrolysis which occurs prior to release of AdoMet from the enzyme. This is S-adenosylmethionine synthase from Prochlorococcus marinus (strain MIT 9313).